Reading from the N-terminus, the 350-residue chain is MNELDSLVTSARESFARSATPAELENAKAQFLGKSGRLTELMKGMAQLSPEEKKTRGAAINVAKQAVEAALAARRQELADAELQAQLKAEALDVTLPGRQRGRGGLHPVSLTLERIERIFGSMGFEVADGPEIETDWFNFTALNTPEDHPARSMHDTFYVEGGTPEAPNLLRTHTSPMQVRYAVQHVKKHRGLIDAGQAMPEIRVIAPGRTYRVDSDATHSPMFHQCEGLWIGENVSFKDLKVVFTDFCKTFFESDDLVLRFRPSFFPFTEPSAEIDIQFQSGPLAGKWLEVAGSGQVHPNVVRNMGLDPERFIGFAFGMGPDRLTMLRYGVNDLRLFFDGDIRFLSQFQ.

Glutamate 271 serves as a coordination point for Mg(2+).

The protein belongs to the class-II aminoacyl-tRNA synthetase family. Phe-tRNA synthetase alpha subunit type 1 subfamily. As to quaternary structure, tetramer of two alpha and two beta subunits. Mg(2+) is required as a cofactor.

It is found in the cytoplasm. It carries out the reaction tRNA(Phe) + L-phenylalanine + ATP = L-phenylalanyl-tRNA(Phe) + AMP + diphosphate + H(+). The polypeptide is Phenylalanine--tRNA ligase alpha subunit (Acidovorax ebreus (strain TPSY) (Diaphorobacter sp. (strain TPSY))).